The following is a 144-amino-acid chain: D-aminoacyl-tRNA deacylase (144 aa).

Positions 136 to 137 (GP) match the Gly-cisPro motif, important for rejection of L-amino acids motif.

Belongs to the DTD family. In terms of assembly, homodimer.

It localises to the cytoplasm. It carries out the reaction glycyl-tRNA(Ala) + H2O = tRNA(Ala) + glycine + H(+). The catalysed reaction is a D-aminoacyl-tRNA + H2O = a tRNA + a D-alpha-amino acid + H(+). Functionally, an aminoacyl-tRNA editing enzyme that deacylates mischarged D-aminoacyl-tRNAs. Also deacylates mischarged glycyl-tRNA(Ala), protecting cells against glycine mischarging by AlaRS. Acts via tRNA-based rather than protein-based catalysis; rejects L-amino acids rather than detecting D-amino acids in the active site. By recycling D-aminoacyl-tRNA to D-amino acids and free tRNA molecules, this enzyme counteracts the toxicity associated with the formation of D-aminoacyl-tRNA entities in vivo and helps enforce protein L-homochirality. This chain is D-aminoacyl-tRNA deacylase, found in Glaesserella parasuis serovar 5 (strain SH0165) (Haemophilus parasuis).